The sequence spans 887 residues: Fibroblast growth factor receptor 2 (887 aa).

The N-terminal stretch at 1–18 (MLNKFIVIVTMLAMWNYA) is a signal peptide. At 19 to 416 (QDCNFELSKN…KDCVGNSYFT (398 aa)) the chain is on the extracellular side. Ig-like C2-type domains follow at residues 22-115 (NFEL…EFIS) and 180-260 (VSGS…LRMK). N-linked (GlcNAc...) asparagine glycans are attached at residues asparagine 28, asparagine 74, asparagine 93, asparagine 230, asparagine 261, asparagine 268, asparagine 328, asparagine 334, and asparagine 364. Cysteine 43 and cysteine 104 are disulfide-bonded. Residues 297-387 (FNLNSRVCIN…YACRIINFKD (91 aa)) form the Ig-like C2-type 3 domain. A disulfide bridge links cysteine 313 with cysteine 380. A helical membrane pass occupies residues 417 to 437 (IIWYSISVGIIILVVISFLII). At 438–887 (RLYNKYSNGY…SNQCYSTTIV (450 aa)) the chain is on the cytoplasmic side. In terms of domain architecture, Protein kinase spans 585–862 (LIIGSKIGEG…IIDKLTHIQL (278 aa)). ATP is bound by residues 591-599 (IGEGAFGIV) and lysine 619. Aspartate 728 (proton acceptor) is an active-site residue. Phosphotyrosine; by autocatalysis is present on tyrosine 757.

Belongs to the protein kinase superfamily. Tyr protein kinase family. Fibroblast growth factor receptor subfamily. Expressed in brain, stem cells and the mesenchymal cells.

The protein localises to the membrane. The enzyme catalyses L-tyrosyl-[protein] + ATP = O-phospho-L-tyrosyl-[protein] + ADP + H(+). Functionally, receptor for basic fibroblast growth factor. The polypeptide is Fibroblast growth factor receptor 2 (FGFR2) (Dugesia japonica (Planarian)).